A 438-amino-acid polypeptide reads, in one-letter code: 3-phosphoshikimate 1-carboxyvinyltransferase (438 aa).

3-phosphoshikimate-binding residues include K26, S27, and R31. K26 is a binding site for phosphoenolpyruvate. Phosphoenolpyruvate-binding residues include G99 and R127. 6 residues coordinate 3-phosphoshikimate: S170, S171, Q172, S199, E314, and H343. Q172 is a phosphoenolpyruvate binding site. Residue E314 is the Proton acceptor of the active site. Positions 347, 388, and 413 each coordinate phosphoenolpyruvate.

Belongs to the EPSP synthase family. In terms of assembly, monomer.

Its subcellular location is the cytoplasm. It carries out the reaction 3-phosphoshikimate + phosphoenolpyruvate = 5-O-(1-carboxyvinyl)-3-phosphoshikimate + phosphate. Its pathway is metabolic intermediate biosynthesis; chorismate biosynthesis; chorismate from D-erythrose 4-phosphate and phosphoenolpyruvate: step 6/7. In terms of biological role, catalyzes the transfer of the enolpyruvyl moiety of phosphoenolpyruvate (PEP) to the 5-hydroxyl of shikimate-3-phosphate (S3P) to produce enolpyruvyl shikimate-3-phosphate and inorganic phosphate. The sequence is that of 3-phosphoshikimate 1-carboxyvinyltransferase from Mycobacterium sp. (strain JLS).